A 315-amino-acid polypeptide reads, in one-letter code: Eukaryotic translation initiation factor 2 subunit 1 (315 aa).

Positions 17-88 (EDVVMVNVRS…EKGYIDLSKR (72 aa)) constitute an S1 motif domain. Ser49 and Ser52 each carry phosphoserine. Residues 292–315 (RLERENAEVDGDDDAEEMEAKTED) are disordered. Positions 299 to 308 (EVDGDDDAEE) are enriched in acidic residues.

Belongs to the eIF-2-alpha family. As to quaternary structure, eukaryotic translation initiation factor 2 eIF2 is a heterotrimeric complex composed of an alpha (EIF2S1), a beta (EIF2S2) and a gamma (EIF2S3) chain. Phosphorylation at Ser-49 and Ser-52 stabilizes the eIF-2/GDP/eIF2B complex and prevents GDP/GTP exchange reaction, thus impairing the recycling of eIF-2 between successive rounds of initiation and leading to global inhibition of translation, while concomitantly initiating the preferential translation of integrated stress response (ISR)-specific mRNAs.

Its subcellular location is the cytoplasm. It is found in the stress granule. The protein localises to the cytosol. Its activity is regulated as follows. Activity is regulated by phosphorylation at Ser-49 and Ser-52, which stabilizes the eIF2/GDP/eIF2B complex and prevents the eIF2B-mediated exchange of GDP for GTP, thereby preventing the formation of the 43S pre-initiation complex (43S PIC). This results in the global attenuation of 5' cap-dependent protein synthesis and concomitant translation of ISR-specific mRNAs that contain a short upstream open reading frame (uORF) in their 5' UTR. Member of the eIF2 complex that functions in the early steps of protein synthesis by forming a ternary complex with GTP and initiator tRNA. This complex binds to a 40S ribosomal subunit, followed by mRNA binding to form a 43S pre-initiation complex. Junction of the 60S ribosomal subunit to form the 80S initiation complex is preceded by hydrolysis of the GTP bound to eIF2 and release of an eIF2-GDP binary complex. In order for eIF2 to recycle and catalyze another round of initiation, the GDP bound to eIF2 must exchange with GTP by way of a reaction catalyzed by eIF2B. EIF2S1/eIF2-alpha is a key component of the integrated stress response (ISR), required for adaptation to various stress: phosphorylation by metabolic-stress sensing protein kinases (EIF2AK1/HRI, EIF2AK2/PKR, EIF2AK3/PERK and EIF2AK4/GCN2) in response to stress converts EIF2S1/eIF2-alpha in a global protein synthesis inhibitor, leading to a attenuation of cap-dependent translation, while concomitantly initiating the preferential translation of ISR-specific mRNAs, such as the transcriptional activators ATF4 and QRICH1. This is Eukaryotic translation initiation factor 2 subunit 1 (EIF2S1) from Gallus gallus (Chicken).